A 173-amino-acid chain; its full sequence is Inorganic pyrophosphatase (173 aa).

Substrate-binding residues include lysine 26, arginine 40, and tyrosine 52. 3 residues coordinate Mg(2+): aspartate 62, aspartate 67, and aspartate 99. A substrate-binding site is contributed by tyrosine 138.

It belongs to the PPase family. Homohexamer. The cofactor is Mg(2+).

Its subcellular location is the cytoplasm. It carries out the reaction diphosphate + H2O = 2 phosphate + H(+). Functionally, catalyzes the hydrolysis of inorganic pyrophosphate (PPi) forming two phosphate ions. The protein is Inorganic pyrophosphatase of Sulfolobus acidocaldarius (strain ATCC 33909 / DSM 639 / JCM 8929 / NBRC 15157 / NCIMB 11770).